We begin with the raw amino-acid sequence, 774 residues long: 5-methyltetrahydropteroyltriglutamate--homocysteine methyltransferase (774 aa).

Residues 23-26 (RELK) and lysine 123 contribute to the 5-methyltetrahydropteroyltri-L-glutamate site. L-homocysteine contacts are provided by residues 446 to 448 (IGS) and glutamate 499. Residues 446–448 (IGS) and glutamate 499 each bind L-methionine. 5-methyltetrahydropteroyltri-L-glutamate is bound by residues 530 to 531 (RC) and tryptophan 576. Aspartate 614 contacts L-homocysteine. Aspartate 614 contacts L-methionine. 5-methyltetrahydropteroyltri-L-glutamate is bound at residue glutamate 620. Zn(2+)-binding residues include histidine 656, cysteine 658, and glutamate 680. Histidine 709 functions as the Proton donor in the catalytic mechanism. Position 741 (cysteine 741) interacts with Zn(2+).

This sequence belongs to the vitamin-B12 independent methionine synthase family. Zn(2+) serves as cofactor.

The catalysed reaction is 5-methyltetrahydropteroyltri-L-glutamate + L-homocysteine = tetrahydropteroyltri-L-glutamate + L-methionine. Its pathway is amino-acid biosynthesis; L-methionine biosynthesis via de novo pathway; L-methionine from L-homocysteine (MetE route): step 1/1. Its function is as follows. Catalyzes the transfer of a methyl group from 5-methyltetrahydrofolate to homocysteine resulting in methionine formation. The sequence is that of 5-methyltetrahydropteroyltriglutamate--homocysteine methyltransferase from Aliivibrio fischeri (strain ATCC 700601 / ES114) (Vibrio fischeri).